The primary structure comprises 514 residues: Glutamate--cysteine ligase, chloroplastic (514 aa).

A chloroplast-targeting transit peptide spans 1–55 (MALLSQAGGAYTVPSGHVSSRTGTKTVSGCVNVLRMKETYVSSYSRTLSTKSMLK). 2 cysteine pairs are disulfide-bonded: Cys178-Cys398 and Cys341-Cys356.

Belongs to the carboxylate-amine ligase family. Glutamate--cysteine ligase type 2 subfamily. As to quaternary structure, homodimer or monomer when oxidized or reduced, respectively. In terms of processing, the Cys-178-Cys-398 disulfide bridge is known to modulate the enzyme activity according to the redox status. The oxidized form constitutes the active enzyme.

Its subcellular location is the plastid. It is found in the chloroplast. It catalyses the reaction L-cysteine + L-glutamate + ATP = gamma-L-glutamyl-L-cysteine + ADP + phosphate + H(+). It participates in sulfur metabolism; glutathione biosynthesis; glutathione from L-cysteine and L-glutamate: step 1/2. Functionally, participates in the detoxification process. The chain is Glutamate--cysteine ligase, chloroplastic (GSH1) from Brassica juncea (Indian mustard).